Consider the following 190-residue polypeptide: E3 ubiquitin-protein ligase RNF183 (190 aa).

Residues 1–159 are Cytoplasmic-facing; that stretch reads MSEPQGQELR…RECVRNPHFR (159 aa). An RING-type zinc finger spans residues 13 to 60; it reads CPVCWNPFNNTFHTPKVLDCCHSFCVECLAHLSLVTPARRRLLCPLCR. Residues 160–180 traverse the membrane as a helical; Anchor for type IV membrane protein segment; that stretch reads IFAYLMAVILSVTLLLIFSIF. Residues 181–190 are Lumenal-facing; the sequence is WTKQFFWGMG.

Interacts with FATE1. Interacts with SEC16A. Interacts with BCL2L1. In terms of processing, autoubiquitinated (in vitro). In terms of tissue distribution, highly expressed in the kidney and testis.

The protein resides in the endoplasmic reticulum membrane. Its subcellular location is the endoplasmic reticulum. It localises to the golgi apparatus. The protein localises to the cis-Golgi network membrane. It is found in the lysosome membrane. It carries out the reaction S-ubiquitinyl-[E2 ubiquitin-conjugating enzyme]-L-cysteine + [acceptor protein]-L-lysine = [E2 ubiquitin-conjugating enzyme]-L-cysteine + N(6)-ubiquitinyl-[acceptor protein]-L-lysine.. Its pathway is protein modification; protein ubiquitination. Its function is as follows. Acts as an E3 ubiquitin ligase catalyzing the covalent attachment of ubiquitin moieties onto substrate proteins. Triggers apoptosis in response to prolonged ER stress by mediating the polyubiquitination and subsequent proteasomal degradation of BCL2L1. May collaborate with FATE1 to restrain BIK protein levels thus regulating apoptotic signaling. This Mus musculus (Mouse) protein is E3 ubiquitin-protein ligase RNF183 (Rnf183).